A 534-amino-acid chain; its full sequence is Peptide chain release factor 3 (534 aa).

The 270-residue stretch at 9–278 (ARRRTFAIIS…FFVEHAPSPQ (270 aa)) folds into the tr-type G domain. GTP contacts are provided by residues 18-25 (SHPDAGKT), 86-90 (DTPGH), and 140-143 (NKLD).

It belongs to the TRAFAC class translation factor GTPase superfamily. Classic translation factor GTPase family. PrfC subfamily.

Its subcellular location is the cytoplasm. Functionally, increases the formation of ribosomal termination complexes and stimulates activities of RF-1 and RF-2. It binds guanine nucleotides and has strong preference for UGA stop codons. It may interact directly with the ribosome. The stimulation of RF-1 and RF-2 is significantly reduced by GTP and GDP, but not by GMP. This is Peptide chain release factor 3 from Xylella fastidiosa (strain M23).